A 63-amino-acid chain; its full sequence is Hirudin (63 aa).

The tract at residues 1-3 is interaction with thrombin active site; it reads VVY. 3 disulfides stabilise this stretch: Cys6–Cys14, Cys16–Cys28, and Cys22–Cys39. Residues 39–63 form a disordered region; the sequence is CVTGEGTPGPQSHNDGDFEEPEEYL. O-linked (GalNAc...) threonine glycosylation is present at Thr45. The interval 55–63 is interaction with fibrinogen-binding exosite of thrombin; the sequence is DFEEPEEYL. The residue at position 62 (Tyr62) is a Sulfotyrosine.

Belongs to the protease inhibitor I14 (hirudin) family.

The protein resides in the secreted. Hirudin is a potent thrombin-specific protease inhibitor. It forms a stable non-covalent complex with alpha-thrombin, thereby abolishing its ability to cleave fibrinogen. The protein is Hirudin of Poecilobdella viridis (Indian freshwater leech).